The primary structure comprises 522 residues: Putative lipase ATG15 (522 aa).

Residues 1–5 (MYIPG) lie on the Cytoplasmic side of the membrane. The helical; Signal-anchor for type II membrane protein transmembrane segment at 6-26 (PLRLSSYLLPFLSSPSPPAQS) threads the bilayer. Topologically, residues 27–522 (SPDTRTISFK…CYKWEFGEWN (496 aa)) are lumenal. N-linked (GlcNAc...) asparagine glycans are attached at residues N48, N133, N196, N220, N302, and N309. S318 acts as the Charge relay system in catalysis. N-linked (GlcNAc...) asparagine glycosylation occurs at N361. Residues 481–506 (RRGPKRQPGGEDPGWRKHGGVPKPVS) are disordered.

Belongs to the AB hydrolase superfamily. Lipase family. In terms of assembly, binds to both phosphatidylinositol (PI) and phosphatidylinositol 3,5-bisphosphate (PIP2).

Its subcellular location is the endoplasmic reticulum membrane. The protein resides in the golgi apparatus membrane. It is found in the endosome. The protein localises to the multivesicular body membrane. It localises to the prevacuolar compartment membrane. The enzyme catalyses a triacylglycerol + H2O = a diacylglycerol + a fatty acid + H(+). Functionally, lipase which is essential for lysis of subvacuolar cytoplasm to vacuole targeted bodies and intravacuolar autophagic bodies. Involved in the lysis of intravacuolar multivesicular body (MVB) vesicles. The intravacuolar membrane disintegration by ATG15 is critical to life span extension. In Cryptococcus neoformans var. neoformans serotype D (strain JEC21 / ATCC MYA-565) (Filobasidiella neoformans), this protein is Putative lipase ATG15 (ATG15).